The primary structure comprises 231 residues: AA9 family lytic polysaccharide monooxygenase F (231 aa).

Positions 1-17 (MLPSISLLLAAALGTSA) are cleaved as a signal peptide. Cu(2+)-binding residues include His-18, Asp-50, and His-89. Asp-50 serves as a coordination point for O2. 2 disulfide bridges follow: Cys-59–Cys-177 and Cys-147–Cys-231. O2 is bound by residues His-163 and Gln-172. Tyr-174 serves as a coordination point for Cu(2+).

The protein belongs to the polysaccharide monooxygenase AA9 family. Cu(2+) is required as a cofactor.

It is found in the secreted. The catalysed reaction is [(1-&gt;4)-beta-D-glucosyl]n+m + reduced acceptor + O2 = 4-dehydro-beta-D-glucosyl-[(1-&gt;4)-beta-D-glucosyl]n-1 + [(1-&gt;4)-beta-D-glucosyl]m + acceptor + H2O.. Its function is as follows. Lytic polysaccharide monooxygenase (LPMO) that depolymerizes crystalline and amorphous polysaccharides via the oxidation of scissile alpha- or beta-(1-4)-glycosidic bonds, yielding C1 oxidation products. Catalysis by LPMOs requires the reduction of the active-site copper from Cu(II) to Cu(I) by a reducing agent and H(2)O(2) or O(2) as a cosubstrate. The polypeptide is AA9 family lytic polysaccharide monooxygenase F (gh61-6) (Neurospora crassa (strain ATCC 24698 / 74-OR23-1A / CBS 708.71 / DSM 1257 / FGSC 987)).